We begin with the raw amino-acid sequence, 109 residues long: Archaeosine synthase (109 aa).

C21 functions as the Thioimide intermediate in the catalytic mechanism. D28 functions as the Proton donor/acceptor in the catalytic mechanism. Substrate is bound by residues D28, 43-46 (LAIE), and 62-63 (HE).

It belongs to the archaeosine synthase type 2 family. As to quaternary structure, forms a symmetric tunnel-fold (T-fold) homodecamer of two head-to-head facing pentameric subunits, with 10 active sites at the intermonomer interfaces.

It carries out the reaction 7-cyano-7-carbaguanosine(15) in tRNA + NH4(+) = archaeosine(15) in tRNA. It participates in tRNA modification; archaeosine-tRNA biosynthesis. Its function is as follows. Is responsible for the final step in the biosynthesis of archaeosine, a modified nucleoside present in the dihydrouridine loop (D-loop) of archaeal tRNA. Catalyzes the conversion of 7-cyano-7-deazaguanine (preQ0)-modified tRNA to archaeosine-tRNA, transforming a nitrile group to a formamidine group. Can use neither glutamine nor asparagine as amino donor in vitro, is only able to utilize free ammonium. However, the enzyme might function in vivo with a partner that serves to generate ammonium. The polypeptide is Archaeosine synthase (Pyrobaculum calidifontis (strain DSM 21063 / JCM 11548 / VA1)).